Consider the following 106-residue polypeptide: Large ribosomal subunit protein uL24 (106 aa).

Residues 1-20 (MNKRAKSKNREPLRKSPVKR) are disordered. The segment covering 8 to 20 (KNREPLRKSPVKR) has biased composition (basic and acidic residues).

This sequence belongs to the universal ribosomal protein uL24 family. As to quaternary structure, part of the 50S ribosomal subunit.

One of two assembly initiator proteins, it binds directly to the 5'-end of the 23S rRNA, where it nucleates assembly of the 50S subunit. In terms of biological role, one of the proteins that surrounds the polypeptide exit tunnel on the outside of the subunit. This chain is Large ribosomal subunit protein uL24, found in Methylacidiphilum infernorum (isolate V4) (Methylokorus infernorum (strain V4)).